The chain runs to 442 residues: MRERTTELVQGFRHSVPYINAHRGKKFVIMLSGEAIKYGNFSGIINDIGLLHSLGIRLIVVYGSCPQINANLKEKNIKITYHKYIRVTDLLSLEQVKQAAGRLQLDITARLSMSLSNTPLQGANINVVSGNFIIAQPLGVDDGIDYCHSGRIRRIDKKAINCQLENGAIVLIGPVAVSVTGESFNLTSEEIATQVSIKLKAEKMIGFCSKQGVIDSQGKTISELLPNNIQNEIKKLEGKGDYISSTIRFLRGSIKACKSGVNRSHLISYHKNGALLQELFSRDGIGTQMVMESAEKIRQANINDIGGILELIRPLEKKGILVRRSREQLEMEVDKFTIIERDNLTIACAALYPFFKEKIGEMACVAVHPDYRNSSRGDLLLQTMKLNAKKLNLKKIFVLTTQSIHWFQERGFILVDVEILPESKKKMYNYQRCSKILMIDLF.

The region spanning 295–442 (EKIRQANIND…CSKILMIDLF (148 aa)) is the N-acetyltransferase domain.

This sequence belongs to the acetyltransferase family. ArgA subfamily. Homohexamer.

It is found in the cytoplasm. It catalyses the reaction L-glutamate + acetyl-CoA = N-acetyl-L-glutamate + CoA + H(+). It functions in the pathway amino-acid biosynthesis; L-arginine biosynthesis; N(2)-acetyl-L-ornithine from L-glutamate: step 1/4. The chain is Amino-acid acetyltransferase (argA) from Buchnera aphidicola subsp. Schizaphis graminum (strain Sg).